The primary structure comprises 160 residues: D-aminoacyl-tRNA deacylase 2 (160 aa).

Positions glycine 152–proline 153 match the Gly-transPro motif, allows the protein to recognize chirality of D-amino acids motif.

Belongs to the DTD family. Homodimer.

It is found in the cytoplasm. It carries out the reaction a D-aminoacyl-tRNA + H2O = a tRNA + a D-alpha-amino acid + H(+). The enzyme catalyses glycyl-tRNA(Ala) + H2O = tRNA(Ala) + glycine + H(+). The catalysed reaction is D-tyrosyl-tRNA(Tyr) + H2O = D-tyrosine + tRNA(Tyr). It catalyses the reaction L-alanyl-tRNA(Thr) + H2O = tRNA(Thr) + L-alanine + H(+). Deacylates mischarged D-aminoacyl-tRNAs. Also deacylates mischarged glycyl-tRNA(Ala), protecting cells against glycine mischarging by AlaRS. Probably acts by rejecting L-amino acids from its binding site rather than specific recognition of D-amino acids. Catalyzes the hydrolysis of D-tyrosyl-tRNA(Tyr), has no activity on correctly charged L-tyrosyl-tRNA(Tyr). By recycling D-aminoacyl-tRNA to D-amino acids and free tRNA molecules, this enzyme counteracts the toxicity associated with the formation of D-aminoacyl-tRNA entities in vivo and helps enforce protein L-homochirality. In contrast to DTD1, deacylates L-Ala mischarged on tRNA(Thr)(G4.U69) by alanine-tRNA ligase AARS. Can deacylate L-Ala due to a relaxed specificity for substrate chirality caused by the trans conformation of the Gly-Pro motif in the active site. Also hydrolyzes correctly charged, achiral, glycyl-tRNA(Gly) in vitro, although in vivo eef1a1a/EF-Tu may protect cognate achiral glycyl-tRNA(Gly) from DTD2-mediated deacetylation. This Danio rerio (Zebrafish) protein is D-aminoacyl-tRNA deacylase 2 (dtd2).